Reading from the N-terminus, the 159-residue chain is Small ribosomal subunit protein uS4 (159 aa).

The 53-residue stretch at 106-158 (RRLQTIVYRKGLAKSIYHARQLVVHGHVAVAGRRVTSPGFLVPRDLEDKITLI) folds into the S4 RNA-binding domain.

It belongs to the universal ribosomal protein uS4 family. Part of the 30S ribosomal subunit. Contacts protein S5. The interaction surface between S4 and S5 is involved in control of translational fidelity.

One of the primary rRNA binding proteins, it binds directly to 16S rRNA where it nucleates assembly of the body of the 30S subunit. Functionally, with S5 and S12 plays an important role in translational accuracy. The protein is Small ribosomal subunit protein uS4 of Pyrobaculum islandicum (strain DSM 4184 / JCM 9189 / GEO3).